The sequence spans 38 residues: Large ribosomal subunit protein bL36 (38 aa).

Belongs to the bacterial ribosomal protein bL36 family.

The chain is Large ribosomal subunit protein bL36 from Amoebophilus asiaticus (strain 5a2).